Reading from the N-terminus, the 217-residue chain is Somatotropin (217 aa).

The first 26 residues, 1–26, serve as a signal peptide directing secretion; that stretch reads MAPGSRTSLLLAFGLLCLPWLQEGSA. His44 contributes to the Zn(2+) binding site. The cysteines at positions 79 and 191 are disulfide-linked. Phosphoserine is present on Ser132. Position 200 (Glu200) interacts with Zn(2+). Cys208 and Cys215 form a disulfide bridge.

Belongs to the somatotropin/prolactin family.

The protein localises to the secreted. Plays an important role in growth control. Its major role in stimulating body growth is to stimulate the liver and other tissues to secrete IGF1. It stimulates both the differentiation and proliferation of myoblasts. It also stimulates amino acid uptake and protein synthesis in muscle and other tissues. The chain is Somatotropin (GH1) from Pan troglodytes (Chimpanzee).